The following is a 341-amino-acid chain: Limbic system-associated membrane protein (341 aa).

An N-terminal signal peptide occupies residues 1 to 28; it reads MVGRVQPDRKQLPLVLLRLLCLLPTGLP. 3 Ig-like domains span residues 29–122, 132–214, and 219–304; these read VRSV…PKTS, PKIS…VKVT, and PTIT…ASLV. 2 N-linked (GlcNAc...) asparagine glycosylation sites follow: asparagine 40 and asparagine 66. A disulfide bond links cysteine 53 and cysteine 111. Residue tyrosine 94 is modified to Phosphotyrosine. Residues asparagine 136 and asparagine 148 are each glycosylated (N-linked (GlcNAc...) asparagine). 2 disulfide bridges follow: cysteine 153/cysteine 197 and cysteine 239/cysteine 290. N-linked (GlcNAc...) asparagine glycans are attached at residues asparagine 279, asparagine 287, and asparagine 300.

It belongs to the immunoglobulin superfamily. IgLON family.

The protein localises to the cell membrane. Functionally, mediates selective neuronal growth and axon targeting. Contributes to the guidance of developing axons and remodeling of mature circuits in the limbic system. Essential for normal growth of the hippocampal mossy fiber projection. The polypeptide is Limbic system-associated membrane protein (Lsamp) (Mus musculus (Mouse)).